Here is a 476-residue protein sequence, read N- to C-terminus: Ribulose bisphosphate carboxylase/oxygenase activase 1, chloroplastic (476 aa).

The transit peptide at 1–56 (MAAAYSTVGAVNRAPLSLNGSGARASLVPSTAFFGSSLKKSAAKFPKASSGNFKIV) directs the protein to the chloroplast. 165-172 (GGKGQGKS) contributes to the ATP binding site.

The protein belongs to the RuBisCO activase family.

It localises to the plastid. The protein resides in the chloroplast stroma. Its function is as follows. Activation of RuBisCO (ribulose-1,5-bisphosphate carboxylase/oxygenase; EC 4.1.1.39) involves the ATP-dependent carboxylation of the epsilon-amino group of lysine leading to a carbamate structure. The polypeptide is Ribulose bisphosphate carboxylase/oxygenase activase 1, chloroplastic (RCA1) (Larrea tridentata (Creosote bush)).